We begin with the raw amino-acid sequence, 164 residues long: Phosphopantetheine adenylyltransferase (164 aa).

Substrate is bound at residue Thr-10. Residues 10–11 (TF) and His-18 each bind ATP. Residues Lys-42, Leu-74, and Arg-88 each coordinate substrate. ATP contacts are provided by residues 89–91 (GIR), Glu-99, and 124–130 (NSFISST).

It belongs to the bacterial CoaD family. In terms of assembly, homohexamer. It depends on Mg(2+) as a cofactor.

It is found in the cytoplasm. It catalyses the reaction (R)-4'-phosphopantetheine + ATP + H(+) = 3'-dephospho-CoA + diphosphate. Its pathway is cofactor biosynthesis; coenzyme A biosynthesis; CoA from (R)-pantothenate: step 4/5. Reversibly transfers an adenylyl group from ATP to 4'-phosphopantetheine, yielding dephospho-CoA (dPCoA) and pyrophosphate. The polypeptide is Phosphopantetheine adenylyltransferase (Pseudoalteromonas translucida (strain TAC 125)).